The chain runs to 199 residues: Putative inactive ribonuclease 11 (199 aa).

The signal sequence occupies residues 1-16; that stretch reads METFPLLLLSLGLVLA. Asn61 carries N-linked (GlcNAc...) asparagine glycosylation. His82 (proton acceptor) is an active-site residue. Residues Asn89 and Asn111 are each glycosylated (N-linked (GlcNAc...) asparagine). Disulfide bonds link Cys98–Cys158 and Cys114–Cys169. Position 115 to 119 (115 to 119) interacts with substrate; that stretch reads KWSNN.

It belongs to the pancreatic ribonuclease family.

The protein localises to the secreted. This chain is Putative inactive ribonuclease 11 (RNASE11), found in Homo sapiens (Human).